The sequence spans 181 residues: Protein OPG005 (181 aa).

This is Protein OPG005 (OPG005) from Vaccinia virus (strain Copenhagen) (VACV).